A 497-amino-acid polypeptide reads, in one-letter code: Tryptophan decarboxylase 2 (497 aa).

Ala162, Ser163, Thr257, and Asn311 together coordinate pyridoxal 5'-phosphate. N6-(pyridoxal phosphate)lysine is present on Lys314.

It belongs to the group II decarboxylase family. It depends on pyridoxal 5'-phosphate as a cofactor.

The catalysed reaction is L-tryptophan + H(+) = tryptamine + CO2. Functionally, involved in serotonin biosynthesis. Catalyzes the decarboxylation of L-tryptophan to tryptamine, which is converted to serotonin by tryptamine 5-hydroxylase. May play a minor role in serotonin biosynthetis during senescence. Accumulation of serotonin attenuates leaf senescence. The chain is Tryptophan decarboxylase 2 from Oryza sativa subsp. japonica (Rice).